A 231-amino-acid polypeptide reads, in one-letter code: Large ribosomal subunit protein uL3 (231 aa).

An N5-methylglutamine modification is found at glutamine 151.

Belongs to the universal ribosomal protein uL3 family. In terms of assembly, part of the 50S ribosomal subunit. Forms a cluster with proteins L14 and L19. Methylated by PrmB.

Functionally, one of the primary rRNA binding proteins, it binds directly near the 3'-end of the 23S rRNA, where it nucleates assembly of the 50S subunit. The protein is Large ribosomal subunit protein uL3 of Ehrlichia canis (strain Jake).